The following is a 298-amino-acid chain: MTAVISLPDPPQRASRGPRVAGPGQDRLGKRLRRQVGQAIADFGMIEAGDKVMVCLSGGKDSYTLLDLLLQLQKRAPVPFELVAVNLDQKQPGFPEHVLPEYLAALGVPYQIIEQDTYSVVSRVIPEGRTMCSLCSRLRRGALYNHAKAHGFTRIALGHHCDDMVATLFMNLFHHAKLAAMPPKLLSDDGQHVVIRPLAYVREHDIAEYAQARRFPIIPCTLCGSQESLQRRQVGLMLKQWDQDHPGRIEQIARAMADVRPAQLADATLFDFRALGHSGHAAHADAWLADAVPETPAD.

The segment at 1–26 (MTAVISLPDPPQRASRGPRVAGPGQD) is disordered. The short motif at 57-62 (SGGKDS) is the PP-loop motif element. Residues Cys132, Cys135, and Cys223 each coordinate [4Fe-4S] cluster.

The protein belongs to the TtcA family. As to quaternary structure, homodimer. Requires Mg(2+) as cofactor. [4Fe-4S] cluster is required as a cofactor.

The protein localises to the cytoplasm. The catalysed reaction is cytidine(32) in tRNA + S-sulfanyl-L-cysteinyl-[cysteine desulfurase] + AH2 + ATP = 2-thiocytidine(32) in tRNA + L-cysteinyl-[cysteine desulfurase] + A + AMP + diphosphate + H(+). The protein operates within tRNA modification. In terms of biological role, catalyzes the ATP-dependent 2-thiolation of cytidine in position 32 of tRNA, to form 2-thiocytidine (s(2)C32). The sulfur atoms are provided by the cysteine/cysteine desulfurase (IscS) system. The polypeptide is tRNA-cytidine(32) 2-sulfurtransferase (Stenotrophomonas maltophilia (strain R551-3)).